The chain runs to 45 residues: Phospholipase A2 3 (45 aa).

Residues Tyr20, Gly24, and Gly25 each coordinate Ca(2+). Cys21 and Cys36 are joined by a disulfide. His39 is a catalytic residue. Asp40 serves as a coordination point for Ca(2+).

The cofactor is Ca(2+). As to expression, expressed by the venom gland.

The protein localises to the secreted. The enzyme catalyses a 1,2-diacyl-sn-glycero-3-phosphocholine + H2O = a 1-acyl-sn-glycero-3-phosphocholine + a fatty acid + H(+). In terms of biological role, PLA2 catalyzes the calcium-dependent hydrolysis of the 2-acyl groups in 3-sn-phosphoglycerides. In Bothrops diporus (Chaco lancehead), this protein is Phospholipase A2 3.